Reading from the N-terminus, the 528-residue chain is Berberine bridge enzyme-like 17 (528 aa).

An N-terminal signal peptide occupies residues 1 to 19; sequence MKEVVYVLLLVLLVSVSDA. N-linked (GlcNAc...) asparagine glycosylation is found at N20, N35, N52, and N72. A disulfide bond links C32 and C94. In terms of domain architecture, FAD-binding PCMH-type spans 69-246; the sequence is LNPNDTKLIA…LSWKINLVDV (178 aa). Positions 109–171 form a cross-link, 6-(S-cysteinyl)-8alpha-(pros-histidyl)-FAD (His-Cys); that stretch reads HDYEGLSFTS…KTLAFAGGVC (63 aa). Residues N256, N340, and N439 are each glycosylated (N-linked (GlcNAc...) asparagine).

This sequence belongs to the oxygen-dependent FAD-linked oxidoreductase family. Requires FAD as cofactor. In terms of processing, the FAD cofactor is bound via a bicovalent 6-S-cysteinyl, 8alpha-N1-histidyl FAD linkage.

Its subcellular location is the secreted. The protein resides in the cell wall. This is Berberine bridge enzyme-like 17 from Arabidopsis thaliana (Mouse-ear cress).